Reading from the N-terminus, the 294-residue chain is Formamidopyrimidine-DNA glycosylase (294 aa).

The active-site Schiff-base intermediate with DNA is Pro2. Catalysis depends on Glu3, which acts as the Proton donor. Lys61 (proton donor; for beta-elimination activity) is an active-site residue. Residues His104, Arg123, and Lys169 each contribute to the DNA site. An FPG-type zinc finger spans residues 255 to 289 (AVYGRQDEPCRRCGAPIVREKFMNRSSYSCPRCQP). The active-site Proton donor; for delta-elimination activity is the Arg279.

Belongs to the FPG family. Monomer. It depends on Zn(2+) as a cofactor.

The enzyme catalyses Hydrolysis of DNA containing ring-opened 7-methylguanine residues, releasing 2,6-diamino-4-hydroxy-5-(N-methyl)formamidopyrimidine.. It carries out the reaction 2'-deoxyribonucleotide-(2'-deoxyribose 5'-phosphate)-2'-deoxyribonucleotide-DNA = a 3'-end 2'-deoxyribonucleotide-(2,3-dehydro-2,3-deoxyribose 5'-phosphate)-DNA + a 5'-end 5'-phospho-2'-deoxyribonucleoside-DNA + H(+). In terms of biological role, involved in base excision repair of DNA damaged by oxidation or by mutagenic agents. Acts as a DNA glycosylase that recognizes and removes damaged bases. Has a preference for oxidized purines, such as 7,8-dihydro-8-oxoguanine (8-oxoG). Has AP (apurinic/apyrimidinic) lyase activity and introduces nicks in the DNA strand. Cleaves the DNA backbone by beta-delta elimination to generate a single-strand break at the site of the removed base with both 3'- and 5'-phosphates. In Nocardia farcinica (strain IFM 10152), this protein is Formamidopyrimidine-DNA glycosylase.